An 849-amino-acid polypeptide reads, in one-letter code: MDIREEFLRFFESKNHDRVESAPLVPDDATLLFNNAGMVPFKSIFTGEVPSPANPRAVSCQTCIRAGGKHNDLENVGYTARHHTFFEMLGNFSFGNYFKEEAIDYAWEFITGVLKFPKEKLWVTVHESDDEAEALWLRHVSIDRIMRLGDKDNFWQMGDTGPCGPCSEIFFDQGAEKFSGPEDYMGGDGDRFLEIWNLVFMQYERSSDGTLTSLPKPSIDTGMGLERVVAISEGVSSNYSSSLFMPIIKKVETLIEKEYVYATGASYRVIADHIRTSLFLLAQGVNFSNEGRGYVLRRILRRAVRHGYLLGFSEPFMFKLVDTVVEIMGGEYDYLAQKSHSVKEQIELEEARFFKTIASGIELFNAELHNTKDIFSGSVAFKLYDTFGFPLDLTEDMLREKNLKLDSAKFEELMQEQRSRAKAAWKGSGDEAVHGDFKELLEKFSENSFVGYESTKQKSRVLALLDESYHHADKLSAGVNGWVFLDTTPFYAQSGGQCGDIGELNGFAKVLDTKKFFGLNLSQISTEKELKVGDEVEAVVDISRGEITKHHSATHLLHAVLFDVLGDHISQAGSLVEASRLRFDFSHPKAISNEELAEIERRVNYEIMRGIRANTEVMSIDEAKKSGAKAQFGEKYGDEVRVVSFGDASIEFCGGVHVENSANIGSFIITKESGVSAGVRRIEAVCGNAAFNYFSEQRELLREVEHEVKNLDILAGVARLKSNIVELKKELHDAESCIKTDIKIQSINGISVVVDELTSGDIKEKIDELKNQHESLCAILFQVKDDKVMMAAGVKGSDAKAGDWIKHIAPLLGGGGGGRADFAQAGGKDISKLSEAKIEALRYITEVIS.

The Zn(2+) site is built by histidine 551, histidine 555, cysteine 653, and histidine 657.

The protein belongs to the class-II aminoacyl-tRNA synthetase family. Zn(2+) serves as cofactor.

It localises to the cytoplasm. The enzyme catalyses tRNA(Ala) + L-alanine + ATP = L-alanyl-tRNA(Ala) + AMP + diphosphate. Catalyzes the attachment of alanine to tRNA(Ala) in a two-step reaction: alanine is first activated by ATP to form Ala-AMP and then transferred to the acceptor end of tRNA(Ala). Also edits incorrectly charged Ser-tRNA(Ala) and Gly-tRNA(Ala) via its editing domain. This is Alanine--tRNA ligase from Sulfurimonas denitrificans (strain ATCC 33889 / DSM 1251) (Thiomicrospira denitrificans (strain ATCC 33889 / DSM 1251)).